A 327-amino-acid chain; its full sequence is Mycothiol acetyltransferase (327 aa).

N-acetyltransferase domains lie at 11–159 (EPHG…VTLP) and 162–327 (VQIR…EGTS). Glu42 serves as a coordination point for 1D-myo-inositol 2-(L-cysteinylamino)-2-deoxy-alpha-D-glucopyranoside. Residue 89 to 91 (LVI) coordinates acetyl-CoA. Residues Glu189, Lys228, and Glu251 each contribute to the 1D-myo-inositol 2-(L-cysteinylamino)-2-deoxy-alpha-D-glucopyranoside site. Acetyl-CoA is bound by residues 255 to 257 (LGV) and 262 to 268 (QGLGLGR). Tyr289 serves as a coordination point for 1D-myo-inositol 2-(L-cysteinylamino)-2-deoxy-alpha-D-glucopyranoside. Position 294-299 (294-299 (NAPAIR)) interacts with acetyl-CoA.

The protein belongs to the acetyltransferase family. MshD subfamily. Monomer.

It carries out the reaction 1D-myo-inositol 2-(L-cysteinylamino)-2-deoxy-alpha-D-glucopyranoside + acetyl-CoA = mycothiol + CoA + H(+). Catalyzes the transfer of acetyl from acetyl-CoA to desacetylmycothiol (Cys-GlcN-Ins) to form mycothiol. This Acidothermus cellulolyticus (strain ATCC 43068 / DSM 8971 / 11B) protein is Mycothiol acetyltransferase.